A 248-amino-acid polypeptide reads, in one-letter code: Acetylglutamate kinase (248 aa).

Substrate-binding positions include 41 to 42, R63, and N155; that span reads GG.

This sequence belongs to the acetylglutamate kinase family. ArgB subfamily.

Its subcellular location is the cytoplasm. It catalyses the reaction N-acetyl-L-glutamate + ATP = N-acetyl-L-glutamyl 5-phosphate + ADP. The protein operates within amino-acid biosynthesis; L-arginine biosynthesis; N(2)-acetyl-L-ornithine from L-glutamate: step 2/4. In terms of biological role, catalyzes the ATP-dependent phosphorylation of N-acetyl-L-glutamate. In Lactiplantibacillus plantarum (strain ATCC BAA-793 / NCIMB 8826 / WCFS1) (Lactobacillus plantarum), this protein is Acetylglutamate kinase.